The sequence spans 336 residues: Glycerol-3-phosphate dehydrogenase [NAD(P)+] (336 aa).

NADPH-binding residues include S16, Y17, H37, and K111. Sn-glycerol 3-phosphate-binding residues include K111, G140, and T142. A144 is a binding site for NADPH. Residues K196, D249, S259, R260, and N261 each contribute to the sn-glycerol 3-phosphate site. K196 serves as the catalytic Proton acceptor. An NADPH-binding site is contributed by R260. Positions 284 and 286 each coordinate NADPH.

This sequence belongs to the NAD-dependent glycerol-3-phosphate dehydrogenase family.

It localises to the cytoplasm. It catalyses the reaction sn-glycerol 3-phosphate + NAD(+) = dihydroxyacetone phosphate + NADH + H(+). The catalysed reaction is sn-glycerol 3-phosphate + NADP(+) = dihydroxyacetone phosphate + NADPH + H(+). It functions in the pathway membrane lipid metabolism; glycerophospholipid metabolism. In terms of biological role, catalyzes the reduction of the glycolytic intermediate dihydroxyacetone phosphate (DHAP) to sn-glycerol 3-phosphate (G3P), the key precursor for phospholipid synthesis. The polypeptide is Glycerol-3-phosphate dehydrogenase [NAD(P)+] (Haemophilus ducreyi (strain 35000HP / ATCC 700724)).